A 113-amino-acid chain; its full sequence is MNTVRVTFLLVFVLAVSLGQADKDENRMEMQGKTEQGKSYLDFAENLLLQKLEELEAKLLEEDSEESRNSRQKRCIGEGVPCDENDPRCCSGLVCLKPTLHGIWYKSYYCYKK.

The first 21 residues, 1-21, serve as a signal peptide directing secretion; the sequence is MNTVRVTFLLVFVLAVSLGQA. A propeptide spanning residues 22 to 74 is cleaved from the precursor; sequence DKDENRMEMQGKTEQGKSYLDFAENLLLQKLEELEAKLLEEDSEESRNSRQKR. 3 disulfide bridges follow: cysteine 75–cysteine 90, cysteine 82–cysteine 95, and cysteine 89–cysteine 110.

Belongs to the neurotoxin 14 (magi-1) family. 01 (HNTX-16) subfamily. In terms of tissue distribution, expressed by the venom gland.

It localises to the secreted. Its function is as follows. Probable ion channel inhibitor. In Cyriopagopus hainanus (Chinese bird spider), this protein is U11-theraphotoxin-Hhn1a.